The primary structure comprises 627 residues: Altered inheritance of mitochondria protein 9, mitochondrial (627 aa).

The transit peptide at 1–43 (MIRYTVAGHSRRCVVGASKRVGAIKCITVAATKRFISNKPNEV) directs the protein to the mitochondrion.

The protein belongs to the AIM9 family.

Its subcellular location is the mitochondrion. This chain is Altered inheritance of mitochondria protein 9, mitochondrial (AIM9), found in Saccharomyces cerevisiae (strain ATCC 204508 / S288c) (Baker's yeast).